A 56-amino-acid chain; its full sequence is Large ribosomal subunit protein bL32 (56 aa).

Positions M1 to L38 are disordered. The segment covering K7–R16 has biased composition (basic residues).

It belongs to the bacterial ribosomal protein bL32 family.

This is Large ribosomal subunit protein bL32 from Histophilus somni (strain 129Pt) (Haemophilus somnus).